The sequence spans 99 residues: High mobility group nucleosome-binding domain-containing protein 3 (99 aa).

Basic and acidic residues-rich tracts occupy residues 1–25 (MPKRKSPENTEDKDGSKVTKQEPTR), 39–53 (PEPKPRKTSAKKEPG), and 62–72 (GKKEEKQEAGK). The tract at residues 1-99 (MPKRKSPENT…KTESVDNEGE (99 aa)) is disordered. Ser6 carries the post-translational modification Phosphoserine. The residue at position 10 (Thr10) is a Phosphothreonine. 2 positions are modified to phosphoserine: Ser78 and Ser93. The segment covering 81–93 (GETKAEEAQKTES) has biased composition (basic and acidic residues).

Belongs to the HMGN family. Interacts with the ligand binding domain of the thyroid receptor (TR) (in vitro). Requires the presence of thyroid hormone for its interaction. Interacts with transcriptional regulator SEHBP. Interacts with nucleosomes.

The protein localises to the nucleus. Functionally, binds to nucleosomes, regulating chromatin structure and consequently, chromatin-dependent processes such as transcription, DNA replication and DNA repair. Affects both insulin and glucagon levels and modulates the expression of pancreatic genes involved in insulin secretion. Regulates the expression of the glucose transporter SLC2A2 by binding specifically to its promoter region and recruiting PDX1 and additional transcription factors. Regulates the expression of SLC6A9, a glycine transporter which regulates the glycine concentration in synaptic junctions in the central nervous system, by binding to its transcription start site. May play a role in ocular development and astrocyte function. The polypeptide is High mobility group nucleosome-binding domain-containing protein 3 (HMGN3) (Pongo abelii (Sumatran orangutan)).